A 215-amino-acid polypeptide reads, in one-letter code: LysM and putative peptidoglycan-binding domain-containing protein 2 (215 aa).

Residues 1–40 (MADSSPAPSLRAGGPREPRPSAPSPPPPHSRLGSEAEEAE) form a disordered region. An N-acetylalanine modification is found at A2. Phosphoserine occurs at positions 5, 24, 34, and 58. The span at 20–29 (PSAPSPPPPH) shows a compositional bias: pro residues. The region spanning 72–116 (VEHRVRAGDTLQGIALKYGVSMEQIKRANKLFTNDCIFLKKTLNI) is the LysM domain. The disordered stretch occupies residues 194–215 (AKKLKGESRDEEGLYTASLYHS).

This chain is LysM and putative peptidoglycan-binding domain-containing protein 2 (LYSMD2), found in Bos taurus (Bovine).